Reading from the N-terminus, the 467-residue chain is Glutamate--tRNA ligase (467 aa).

Residues 9-19 (PSPTGFLHIGG) carry the 'HIGH' region motif. The 'KMSKS' region signature appears at 241–245 (KLSKR). Residue Lys-244 coordinates ATP.

The protein belongs to the class-I aminoacyl-tRNA synthetase family. Glutamate--tRNA ligase type 1 subfamily. As to quaternary structure, monomer.

The protein resides in the cytoplasm. It catalyses the reaction tRNA(Glu) + L-glutamate + ATP = L-glutamyl-tRNA(Glu) + AMP + diphosphate. Its function is as follows. Catalyzes the attachment of glutamate to tRNA(Glu) in a two-step reaction: glutamate is first activated by ATP to form Glu-AMP and then transferred to the acceptor end of tRNA(Glu). This is Glutamate--tRNA ligase from Methylobacillus flagellatus (strain ATCC 51484 / DSM 6875 / VKM B-1610 / KT).